The primary structure comprises 961 residues: Exportin-T (961 aa).

It belongs to the exportin family.

The protein localises to the cytoplasm. It is found in the nucleus. Functionally, mediates the nuclear export of aminoacylated tRNAs. This Danio rerio (Zebrafish) protein is Exportin-T (xpot).